The primary structure comprises 205 residues: Spermatogenesis-associated protein 24 (205 aa).

A coiled-coil region spans residues 17–166; that stretch reads LAFDQLRDVI…QQRQSFRNHM (150 aa). The required for interaction with CBX5 and TBPL1 stretch occupies residues 138–185; the sequence is EDILNGKENEIKELQQVISQQRQSFRNHMSDFRIQKQQETYMAQVLDQ. A disordered region spans residues 182-205; the sequence is VLDQKHKKTSGTRRARSRQCSREK. Residues 186–205 show a composition bias toward basic residues; sequence KHKKTSGTRRARSRQCSREK.

Belongs to the SPATA24 family. As to quaternary structure, homodimer. Interacts with CBX3, CBX5, GMNN, GTF2B, TBPL1 and the polycomb proteins PHCF2, RNF2 and SCMH1 but not with CBX1 or PCGF2. As to expression, highly expressed in the testis and is mainly localized in the spermatids. Also expressed in the lung, heart, spleen and epididymis.

It localises to the cytoplasm. The protein localises to the nucleus. Its subcellular location is the nucleolus. It is found in the nucleoplasm. Its function is as follows. Binds DNA with high affinity but does not bind to TATA boxes. Synergises with GMNN and TBP in activation of TATA box-containing promoters and with GMNN and TBPL1 in activation of the NF1 TATA-less promoter. May play a role in cytoplasm movement and removal during spermiogenesis. This chain is Spermatogenesis-associated protein 24 (Spata24), found in Rattus norvegicus (Rat).